The chain runs to 410 residues: Peptidase T (410 aa).

Position 77 (His-77) interacts with Zn(2+). Asp-79 is an active-site residue. Zn(2+) is bound at residue Asp-140. Glu-174 acts as the Proton acceptor in catalysis. Residues Glu-175, Asp-197, and His-379 each contribute to the Zn(2+) site.

This sequence belongs to the peptidase M20B family. Requires Zn(2+) as cofactor.

It is found in the cytoplasm. The catalysed reaction is Release of the N-terminal residue from a tripeptide.. Its function is as follows. Cleaves the N-terminal amino acid of tripeptides. The chain is Peptidase T from Desulfitobacterium hafniense (strain DSM 10664 / DCB-2).